A 1069-amino-acid polypeptide reads, in one-letter code: Thyrotropin-releasing hormone-degrading ectoenzyme (1069 aa).

The span at 1 to 11 (MALDGELGEQE) shows a compositional bias: acidic residues. Residues 1–46 (MALDGELGEQEEEKKKKKKKKRKKKKEEEEEEEGAEKSSSPFAAAM) are disordered. Residues 1–85 (MALDGELGEQ…ERHIAVHKRL (85 aa)) lie on the Cytoplasmic side of the membrane. Over residues 15–25 (KKKKKKKRKKK) the composition is skewed to basic residues. The chain crosses the membrane as a helical; Signal-anchor for type II membrane protein span at residues 86–106 (VLAFAVSLVALLAVTMLAVLL). Over 107-1069 (SLRFDECGAS…FQWLGKALRH (963 aa)) the chain is Extracellular. A disordered region spans residues 117–179 (ATPGADGGPS…PSEEEREPWE (63 aa)). Positions 121-136 (ADGGPSGFPERGGNGS) are enriched in gly residues. Residues Asn-134, Asn-205, Asn-220, Asn-267, and Asn-383 are each glycosylated (N-linked (GlcNAc...) asparagine). Residue 449 to 453 (AAMEN) coordinates substrate. His-485 contacts Zn(2+). Residue Glu-486 is the Proton acceptor of the active site. Positions 489 and 508 each coordinate Zn(2+). 7 N-linked (GlcNAc...) asparagine glycosylation sites follow: Asn-650, Asn-679, Asn-694, Asn-708, Asn-729, Asn-845, and Asn-951.

It belongs to the peptidase M1 family. In terms of assembly, homodimer; disulfide-linked. It depends on Zn(2+) as a cofactor. In terms of tissue distribution, predominantly expressed in brain.

It localises to the membrane. It catalyses the reaction Release of the N-terminal pyroglutamyl group from pGlu-|-His-Xaa tripeptides and pGlu-|-His-Xaa-Gly tetrapeptides.. In terms of biological role, specific inactivation of TRH after its release. The chain is Thyrotropin-releasing hormone-degrading ectoenzyme (TRHDE) from Homo sapiens (Human).